The primary structure comprises 129 residues: Prefoldin subunit 6 (129 aa).

Coiled-coil stretches lie at residues Val6–Asp26 and Ile84–Arg118.

Belongs to the prefoldin subunit beta family. In terms of assembly, heterohexamer of two PFD-alpha type and four PFD-beta type subunits forming prefoldin co-chaperone complex. Interacts with PFD2, PFD3, PFD4 and PFD5. Interacts with LSM8, a specific subunit of the LSM2-8 complex, which is a core component of the spliceosome. Binds to HSP90 to facilitate the formation of a larger complex made at least of HSP90, PFD6 and LSM8.

The protein resides in the cytoplasm. Its subcellular location is the nucleus. Functionally, binds specifically to cytosolic chaperonin (c-CPN) and transfers target proteins to it. Binds to nascent polypeptide chain and promotes folding in an environment in which there are many competing pathways for nonnative proteins. Together with other chaperonins, contribute to the regulation of gene expression by modulating the spliceosome function on pre-mRNA splicing post-transcriptionally by acting as a co-chaperone of Hsp90 to control levels of LSM8. Required for the biogenesis of tubulins and for subsequent microtubules (MTs) organization and dynamicity, but unable to associate with microtubules. Involved in the process leading to microtubules dissociation in response to gibberellic acid (GA) probably due to the DELLA proteins-mediated translocation of the prefoldin co-chaperone complex from the cytoplasm to the nucleus. Contributes to the GA-dependent regulation of PIN2 trafficking at the plasma membrane, thus influencing auxin flux. This is Prefoldin subunit 6 from Arabidopsis thaliana (Mouse-ear cress).